We begin with the raw amino-acid sequence, 241 residues long: 1-(5-phosphoribosyl)-5-[(5-phosphoribosylamino)methylideneamino] imidazole-4-carboxamide isomerase (241 aa).

Catalysis depends on D11, which acts as the Proton acceptor. Catalysis depends on D130, which acts as the Proton donor.

Belongs to the HisA/HisF family.

The protein localises to the cytoplasm. It catalyses the reaction 1-(5-phospho-beta-D-ribosyl)-5-[(5-phospho-beta-D-ribosylamino)methylideneamino]imidazole-4-carboxamide = 5-[(5-phospho-1-deoxy-D-ribulos-1-ylimino)methylamino]-1-(5-phospho-beta-D-ribosyl)imidazole-4-carboxamide. It participates in amino-acid biosynthesis; L-histidine biosynthesis; L-histidine from 5-phospho-alpha-D-ribose 1-diphosphate: step 4/9. The chain is 1-(5-phosphoribosyl)-5-[(5-phosphoribosylamino)methylideneamino] imidazole-4-carboxamide isomerase from Acidothermus cellulolyticus (strain ATCC 43068 / DSM 8971 / 11B).